Consider the following 109-residue polypeptide: MSQEIAVVGSPEFTTGFRLAGVRKFETVPDENKDEQLDEAVRSALGDDDVGIIVMHNDDLEHLSRTVREDVETSIEPTLVTLGGGAGAGGLRDQIKRAIGIDLMEEDES.

The protein belongs to the V-ATPase F subunit family. As to quaternary structure, has multiple subunits with at least A(3), B(3), C, D, E, F, H, I and proteolipid K(x).

The protein localises to the cell membrane. Its function is as follows. Component of the A-type ATP synthase that produces ATP from ADP in the presence of a proton gradient across the membrane. The polypeptide is A-type ATP synthase subunit F (Haloquadratum walsbyi (strain DSM 16790 / HBSQ001)).